A 212-amino-acid chain; its full sequence is B3 domain-containing protein Os04g0386900 (212 aa).

Residues 1-78 (MRAATALPSI…PRPPEPEPEK (78 aa)) form a disordered region. Low complexity-rich tracts occupy residues 8–23 (PSIP…ASDP) and 36–46 (DAGAEDPAAVD). The TF-B3 DNA-binding region spans 93-191 (FTCIMCKSHV…EFRVQVLRAE (99 aa)).

It is found in the nucleus. This Oryza sativa subsp. japonica (Rice) protein is B3 domain-containing protein Os04g0386900.